The primary structure comprises 147 residues: DLLSEYGYDLMDTVDEYIPTPERDERKPFMMPIEDVFTITGRGTVASGRIERGVIKLGDEVEIVGLVEDVLKTTVTGIEMFRKTLDEGQAGDNIGALLRGVNREQVVRGQVLAAPGSVQTHEKFSAEVYIMSKEEGGRHTPFFSNYR.

It belongs to the GTP-binding elongation factor family. EF-Tu/EF-1A subfamily. In terms of assembly, monomer.

It localises to the cytoplasm. This protein promotes the GTP-dependent binding of aminoacyl-tRNA to the A-site of ribosomes during protein biosynthesis. The protein is Elongation factor Tu (tuf) of Fructilactobacillus sanfranciscensis (Lactobacillus sanfranciscensis).